A 241-amino-acid polypeptide reads, in one-letter code: MVEPKYKRILIKLSGEALAGDKGVGINIQTVQKMAEEIKEVHDLGIEIALVIGGGNLWRGEPAAEAGMDRVQADYTGMLGTVMNALVMADSLQRVGVDTRVQTAIAMQQVAEPYIRGRALRHLQKGRIVIFGAGIGSPYFSTDTTAALRAAEIEADAILMAKNGVDGVYNADPKKDKTAVKFDELTHRDVISKGLRIMDSTASTLSMDNDIDLVVFNMNEAGNIKRVVFGEQIGTTVSNNL.

Residue 12-15 coordinates ATP; sequence KLSG. The interval 20 to 25 is involved in allosteric activation by GTP; it reads GDKGVG. Gly54 is a UMP binding site. Residues Gly55 and Arg59 each coordinate ATP. UMP-binding positions include Asp74 and 135–142; that span reads IGSPYFST. Residues Asn163, Tyr169, and Asp172 each coordinate ATP.

This sequence belongs to the UMP kinase family. As to quaternary structure, homohexamer.

It localises to the cytoplasm. It catalyses the reaction UMP + ATP = UDP + ADP. It functions in the pathway pyrimidine metabolism; CTP biosynthesis via de novo pathway; UDP from UMP (UMPK route): step 1/1. Its activity is regulated as follows. Allosterically activated by GTP. Inhibited by UTP. Functionally, catalyzes the reversible phosphorylation of UMP to UDP. In Streptococcus gordonii (strain Challis / ATCC 35105 / BCRC 15272 / CH1 / DL1 / V288), this protein is Uridylate kinase.